Reading from the N-terminus, the 966-residue chain is Mitogen-activated protein kinase kinase kinase 13 (966 aa).

Residues 1-59 (MANPQEHLSCSSSPRLPLSENKTFNGLQDDLAPMGSHASPKLLKDQQEKGMVQTELAEG) form a disordered region. The span at 8-19 (LSCSSSPRLPLS) shows a compositional bias: low complexity. The Protein kinase domain maps to 168-409 (ISELQWLGSG…FRQTLMHLDI (242 aa)). Residues 174 to 182 (LGSGAQGAV) and lysine 195 each bind ATP. Aspartate 279 functions as the Proton acceptor in the catalytic mechanism. 2 leucine-zipper regions span residues 433 to 454 (VKKH…DEEL) and 486 to 507 (LSAI…EQAV). A coiled-coil region spans residues 457–496 (RRREELRHALDIREHYERKLERANNLYMELSAIMLQLEMR). 3 disordered regions span residues 561-663 (EVAP…GQDI), 743-874 (LDVP…DELA), and 937-966 (QFEE…SATW). Over residues 567 to 581 (SPLSGSPKLSSSSSK) the composition is skewed to low complexity. Basic residues predominate over residues 582 to 594 (SRYRSKPRHRRGN). Residues 609-622 (QPAQEDSPHPTSLH) are compositionally biased toward polar residues. Low complexity predominate over residues 629–642 (PSSQHHNLLQQQYQ). Residues 814 to 827 (DSSEEEEGEVDSEV) show a composition bias toward acidic residues. The interval 815 to 828 (SSEEEEGEVDSEVE) is acidic. Polar residues predominate over residues 840–855 (SSCQSYSTFSSENFSV). Acidic residues predominate over residues 939–950 (EESDCDSSDGEC). Over residues 954-966 (TVRTNKHYSSATW) the composition is skewed to polar residues.

It belongs to the protein kinase superfamily. Ser/Thr protein kinase family. Homodimer; forms dimers through the leucine-zipper motif. Interacts with the C-terminus of MAPK8IP1 through the kinase catalytic domain. Binds PRDX3. Associates with the IKK complex through the kinase domain. The cofactor is Mg(2+). In terms of processing, autophosphorylated on serine and threonine residues.

Its subcellular location is the cytoplasm. It localises to the membrane. The catalysed reaction is L-seryl-[protein] + ATP = O-phospho-L-seryl-[protein] + ADP + H(+). It catalyses the reaction L-threonyl-[protein] + ATP = O-phospho-L-threonyl-[protein] + ADP + H(+). Activated by autophosphorylation and homodimerization. Activates the JUN N-terminal pathway through activation of the MAP kinase kinase MAP2K7. Acts synergistically with PRDX3 to regulate the activation of NF-kappa-B in the cytosol. This activation is kinase-dependent and involves activating the IKK complex, the IKBKB-containing complex that phosphorylates inhibitors of NF-kappa-B. The sequence is that of Mitogen-activated protein kinase kinase kinase 13 (MAP3K13) from Bos taurus (Bovine).